Here is a 118-residue protein sequence, read N- to C-terminus: Basic phospholipase A2 1 (118 aa).

7 disulfide bridges follow: C11–C72, C26–C117, C28–C44, C43–C98, C50–C91, C60–C84, and C78–C89. Y27, G29, and G31 together coordinate Ca(2+). Residue H47 is part of the active site. Ca(2+) is bound at residue D48. Residue D92 is part of the active site.

Belongs to the phospholipase A2 family. Group I subfamily. D49 sub-subfamily. Ca(2+) serves as cofactor. In terms of tissue distribution, expressed by the venom gland.

Its subcellular location is the secreted. The catalysed reaction is a 1,2-diacyl-sn-glycero-3-phosphocholine + H2O = a 1-acyl-sn-glycero-3-phosphocholine + a fatty acid + H(+). Functionally, PLA2 catalyzes the calcium-dependent hydrolysis of the 2-acyl groups in 3-sn-phosphoglycerides. The sequence is that of Basic phospholipase A2 1 from Naja melanoleuca (Forest cobra).